A 110-amino-acid chain; its full sequence is Nucleoid-associated protein PsycPRwf_1729 (110 aa).

Belongs to the YbaB/EbfC family. Homodimer.

It localises to the cytoplasm. The protein resides in the nucleoid. In terms of biological role, binds to DNA and alters its conformation. May be involved in regulation of gene expression, nucleoid organization and DNA protection. This is Nucleoid-associated protein PsycPRwf_1729 from Psychrobacter sp. (strain PRwf-1).